The primary structure comprises 1414 residues: Phenyloxazoline synthase MbtB (1414 aa).

In terms of domain architecture, Carrier 1 spans 5–78 (TACSEIIRAE…AWSQLVSAGT (74 aa)). The residue at position 39 (Ser-39) is an O-(pantetheine 4'-phosphoryl)serine. The segment at 96–394 (EGEPFPLAPM…SSLLLDVDLT (299 aa)) is condensation/cyclization. The interval 579 to 975 (SYAQLRDQAS…RLPGVHAAAA (397 aa)) is adenylation. Residues 1057–1135 (APRTVLQRAL…ALAQLLTGRE (79 aa)) form the Carrier 2 domain. Ser-1094 carries the post-translational modification O-(pantetheine 4'-phosphoryl)serine. Positions 1188–1413 (GAVLVFPHAG…AVARMVSADV (226 aa)) are thioesterase.

The protein belongs to the ATP-dependent AMP-binding enzyme family. MbtB subfamily. Pantetheine 4'-phosphate serves as cofactor. 4'-phosphopantetheine is transferred from CoA to a specific serine in each of the two carrier protein domains, leading to their activation from apo to holo forms.

It functions in the pathway siderophore biosynthesis; mycobactin biosynthesis. Its function is as follows. Involved in the initial steps of the mycobactin biosynthetic pathway. Putatively couples activated salicylic acid with serine or threonine and cyclizes this precursor to the hydroxyphenyloxazoline ring system present in this class of siderophores. Essential for growth in macrophages. The protein is Phenyloxazoline synthase MbtB (mbtB) of Mycobacterium tuberculosis (strain ATCC 25618 / H37Rv).